The primary structure comprises 299 residues: Regucalcin (299 aa).

Residue Glu-18 coordinates a divalent metal cation. The substrate site is built by Arg-101, Asn-103, and Glu-121. Lys-144 carries the post-translational modification N6-succinyllysine. A divalent metal cation contacts are provided by Asn-154 and Asp-204. Asp-204 serves as the catalytic Proton donor/acceptor. N6-succinyllysine occurs at positions 244 and 253.

Belongs to the SMP-30/CGR1 family. In terms of assembly, monomer. Zn(2+) is required as a cofactor. The cofactor is Mn(2+). Requires Ca(2+) as cofactor. It depends on Mg(2+) as a cofactor.

The protein resides in the cytoplasm. It catalyses the reaction D-glucono-1,5-lactone + H2O = D-gluconate + H(+). Its function is as follows. Gluconolactonase with low activity towards other sugar lactones, including gulonolactone and galactonolactone. Can also hydrolyze diisopropyl phosphorofluoridate and phenylacetate (in vitro). Calcium-binding protein. Modulates Ca(2+) signaling, and Ca(2+)-dependent cellular processes and enzyme activities. The protein is Regucalcin (RGN) of Pongo abelii (Sumatran orangutan).